The chain runs to 179 residues: Inner membrane-spanning protein YciB (179 aa).

Transmembrane regions (helical) follow at residues 3 to 23 (FLYD…FGIY), 49 to 69 (NALI…LWLQ), 76 to 96 (WKPT…QWLF), 119 to 139 (LNLA…YVAY), and 149 to 169 (FKLF…TLLL).

The protein belongs to the YciB family.

The protein resides in the cell inner membrane. Its function is as follows. Plays a role in cell envelope biogenesis, maintenance of cell envelope integrity and membrane homeostasis. This is Inner membrane-spanning protein YciB from Methylobacillus flagellatus (strain ATCC 51484 / DSM 6875 / VKM B-1610 / KT).